The following is a 2223-amino-acid chain: Sperm-associated antigen 17 (2223 aa).

Basic and acidic residues-rich tracts occupy residues 144-172 (RENE…EKKA) and 200-212 (RRGE…RYID). The segment at 144 to 214 (RENEKKVIED…DHTNRYIDDE (71 aa)) is disordered. Positions 266–295 (NQQQEVLLQSEDLEAEKLKKENAIKELKTF) form a coiled coil. 6 disordered regions span residues 387-416 (MPTS…PPPV), 680-710 (MSVQ…LNNL), 731-762 (PQHE…PKKM), 950-1015 (EERL…EPKI), 1179-1212 (GKIK…PEPV), and 1345-1378 (ETIP…PPPE). Composition is skewed to basic and acidic residues over residues 743–756 (EIKD…DSHE), 950–999 (EERL…EQVK), and 1182–1205 (KGKE…KKEE). The stretch at 940-966 (WKEEQHRLAEEERLREEKKAEKKGKEA) forms a coiled coil. The span at 1345 to 1354 (ETIPSEITNT) shows a compositional bias: polar residues. Residues 1874-1907 (RHTASSKRWKEKIDKTRKEIETTQNYLMDIKNRI) adopt a coiled-coil conformation. 2 disordered regions span residues 1938–1957 (TKKN…DLNL) and 1962–2008 (HKVS…SYEP). Residues 1988–1998 (TAQNQTENLTK) are compositionally biased toward polar residues.

As to quaternary structure, interacts (via the C-terminus) with SPAG6; the interaction probably occurs on polymerized microtubules. Highly expressed in testis. Expressed in organs that contain cilia-bearing cells including brain, oviduct, lung, and uterus.

It localises to the cytoplasm. Its subcellular location is the cytoskeleton. The protein resides in the flagellum axoneme. It is found in the cytoplasmic vesicle. The protein localises to the secretory vesicle. It localises to the acrosome. Its subcellular location is the golgi apparatus. Its function is as follows. Component of the central pair apparatus of ciliary axonemes. Plays a critical role in the function and structure of motile cilia. May play a role in endochondral bone formation, most likely because of a function in primary cilia of chondrocytes and osteoblasts. Essential for normal spermatogenesis and male fertility. Required for normal manchette structure, transport of proteins along the manchette microtubules and formation of the sperm head and flagellum. Essential for sperm flagellum development and proper assembly of the respiratory motile cilia central pair apparatus, but not the brain ependymal cilia. The protein is Sperm-associated antigen 17 (SPAG17) of Homo sapiens (Human).